The following is a 230-amino-acid chain: Cytochrome c oxidase subunit 2 (230 aa).

Residues 1–14 are Mitochondrial intermembrane-facing; it reads MAHPSQLGFQDAAS. A helical membrane pass occupies residues 15 to 45; that stretch reads PVMEELLHFHDHALMIVFLISTLVLYIIVAM. Residues 46 to 59 are Mitochondrial matrix-facing; sequence VSTKLTNKYILDSQ. A helical transmembrane segment spans residues 60-87; sequence EIEIIWTVLPAVILILIALPSLRILYLM. The Mitochondrial intermembrane segment spans residues 88 to 230; that stretch reads DEINDPHLTI…SWSSLMLEDA (143 aa). Cu cation-binding residues include H161, C196, E198, C200, H204, and M207. Residue E198 participates in Mg(2+) binding.

This sequence belongs to the cytochrome c oxidase subunit 2 family. In terms of assembly, component of the cytochrome c oxidase (complex IV, CIV), a multisubunit enzyme composed of 14 subunits. The complex is composed of a catalytic core of 3 subunits MT-CO1, MT-CO2 and MT-CO3, encoded in the mitochondrial DNA, and 11 supernumerary subunits COX4I, COX5A, COX5B, COX6A, COX6B, COX6C, COX7A, COX7B, COX7C, COX8 and NDUFA4, which are encoded in the nuclear genome. The complex exists as a monomer or a dimer and forms supercomplexes (SCs) in the inner mitochondrial membrane with NADH-ubiquinone oxidoreductase (complex I, CI) and ubiquinol-cytochrome c oxidoreductase (cytochrome b-c1 complex, complex III, CIII), resulting in different assemblies (supercomplex SCI(1)III(2)IV(1) and megacomplex MCI(2)III(2)IV(2)). Found in a complex with TMEM177, COA6, COX18, COX20, SCO1 and SCO2. Interacts with TMEM177 in a COX20-dependent manner. Interacts with COX20. Interacts with COX16. The cofactor is Cu cation.

It localises to the mitochondrion inner membrane. The catalysed reaction is 4 Fe(II)-[cytochrome c] + O2 + 8 H(+)(in) = 4 Fe(III)-[cytochrome c] + 2 H2O + 4 H(+)(out). Functionally, component of the cytochrome c oxidase, the last enzyme in the mitochondrial electron transport chain which drives oxidative phosphorylation. The respiratory chain contains 3 multisubunit complexes succinate dehydrogenase (complex II, CII), ubiquinol-cytochrome c oxidoreductase (cytochrome b-c1 complex, complex III, CIII) and cytochrome c oxidase (complex IV, CIV), that cooperate to transfer electrons derived from NADH and succinate to molecular oxygen, creating an electrochemical gradient over the inner membrane that drives transmembrane transport and the ATP synthase. Cytochrome c oxidase is the component of the respiratory chain that catalyzes the reduction of oxygen to water. Electrons originating from reduced cytochrome c in the intermembrane space (IMS) are transferred via the dinuclear copper A center (CU(A)) of subunit 2 and heme A of subunit 1 to the active site in subunit 1, a binuclear center (BNC) formed by heme A3 and copper B (CU(B)). The BNC reduces molecular oxygen to 2 water molecules using 4 electrons from cytochrome c in the IMS and 4 protons from the mitochondrial matrix. The chain is Cytochrome c oxidase subunit 2 (mt-co2) from Gadus morhua (Atlantic cod).